The primary structure comprises 586 residues: U-box domain-containing protein 73 (586 aa).

Residues 21–122 (KADMSGLQRS…AAGADDGPTR (102 aa)) form a disordered region. Residues 50–60 (RSAPTSPLRTP) are compositionally biased toward low complexity. The U-box domain maps to 182–258 (PIPIAHDGTL…SAWCLDHSDL (77 aa)).

The catalysed reaction is S-ubiquitinyl-[E2 ubiquitin-conjugating enzyme]-L-cysteine + [acceptor protein]-L-lysine = [E2 ubiquitin-conjugating enzyme]-L-cysteine + N(6)-ubiquitinyl-[acceptor protein]-L-lysine.. The protein operates within protein modification; protein ubiquitination. Functionally, possesses E3 ubiquitin-protein ligase in vitro. The sequence is that of U-box domain-containing protein 73 (PUB73) from Oryza sativa subsp. japonica (Rice).